Reading from the N-terminus, the 388-residue chain is Phosphoglycerate kinase (388 aa).

Substrate is bound by residues 21 to 23 (DLN), Arg-36, 59 to 62 (HLGR), Arg-114, and Arg-147. Residues Lys-198, Glu-315, and 341–344 (GGDT) each bind ATP.

Belongs to the phosphoglycerate kinase family. As to quaternary structure, monomer.

Its subcellular location is the cytoplasm. The enzyme catalyses (2R)-3-phosphoglycerate + ATP = (2R)-3-phospho-glyceroyl phosphate + ADP. It participates in carbohydrate degradation; glycolysis; pyruvate from D-glyceraldehyde 3-phosphate: step 2/5. In Hahella chejuensis (strain KCTC 2396), this protein is Phosphoglycerate kinase.